The chain runs to 352 residues: tRNA uridine(34) hydroxylase (352 aa).

One can recognise a Rhodanese domain in the interval 144–238 (SDPDVILIDT…YLEEVPASDS (95 aa)). The active-site Cysteine persulfide intermediate is Cys198.

This sequence belongs to the TrhO family.

It catalyses the reaction uridine(34) in tRNA + AH2 + O2 = 5-hydroxyuridine(34) in tRNA + A + H2O. Its function is as follows. Catalyzes oxygen-dependent 5-hydroxyuridine (ho5U) modification at position 34 in tRNAs. In Psychrobacter arcticus (strain DSM 17307 / VKM B-2377 / 273-4), this protein is tRNA uridine(34) hydroxylase.